We begin with the raw amino-acid sequence, 254 residues long: Pimeloyl-[acyl-carrier protein] methyl ester esterase (254 aa).

Residues 14–242 form the AB hydrolase-1 domain; sequence LVLLHGWGMN…ASHAPFISHP (229 aa). Residues W20, 82-83, and 143-147 contribute to the substrate site; these read SL and FLAIQ. The active-site Nucleophile is the S82. Catalysis depends on residues D207 and H235. Position 235 (H235) interacts with substrate.

It belongs to the AB hydrolase superfamily. Carboxylesterase BioH family. In terms of assembly, monomer.

It localises to the cytoplasm. The catalysed reaction is 6-carboxyhexanoyl-[ACP] methyl ester + H2O = 6-carboxyhexanoyl-[ACP] + methanol + H(+). It functions in the pathway cofactor biosynthesis; biotin biosynthesis. In terms of biological role, the physiological role of BioH is to remove the methyl group introduced by BioC when the pimeloyl moiety is complete. It allows to synthesize pimeloyl-ACP via the fatty acid synthetic pathway through the hydrolysis of the ester bonds of pimeloyl-ACP esters. The protein is Pimeloyl-[acyl-carrier protein] methyl ester esterase of Aeromonas salmonicida (strain A449).